The primary structure comprises 20 residues: Alanine aminotransferase 1 (20 aa).

An N6-(pyridoxal phosphate)lysine modification is found at K11. N-linked (Glc) (glycation) lysine; in vitro glycosylation occurs at K11.

It belongs to the class-I pyridoxal-phosphate-dependent aminotransferase family. Alanine aminotransferase subfamily. As to quaternary structure, homodimer. Pyridoxal 5'-phosphate serves as cofactor. Post-translationally, glycation of Lys-11 inactivates the enzyme.

The protein resides in the cytoplasm. It catalyses the reaction L-alanine + 2-oxoglutarate = pyruvate + L-glutamate. Its pathway is amino-acid degradation; L-alanine degradation via transaminase pathway; pyruvate from L-alanine: step 1/1. Functionally, catalyzes the reversible transamination between alanine and 2-oxoglutarate to form pyruvate and glutamate. Participates in cellular nitrogen metabolism and also in liver gluconeogenesis starting with precursors transported from skeletal muscles. This is Alanine aminotransferase 1 (GPT) from Sus scrofa (Pig).